The chain runs to 455 residues: Glycosyl hydrolase family 109 protein (455 aa).

The tat-type signal signal peptide spans 1-33 (MAGIDRRGFLKASMASVAAAALAGCASQQGTSA). Residues 62 to 63 (ER), aspartate 84, glutamine 112, 133 to 136 (WALH), 153 to 154 (EV), and asparagine 182 contribute to the NAD(+) site. Substrate-binding positions include tyrosine 211, arginine 230, 242 to 245 (YPTH), and tyrosine 324. Residue tyrosine 242 participates in NAD(+) binding.

The protein belongs to the Gfo/Idh/MocA family. Glycosyl hydrolase 109 subfamily. NAD(+) is required as a cofactor. Predicted to be exported by the Tat system. The position of the signal peptide cleavage has not been experimentally proven.

In terms of biological role, glycosidase. In Shewanella amazonensis (strain ATCC BAA-1098 / SB2B), this protein is Glycosyl hydrolase family 109 protein.